The chain runs to 349 residues: N-formyl peptide receptor 3 (349 aa).

Topologically, residues 1–27 (METNFSIPLNETEEVLPEPAGHTVLWI) are extracellular. Asparagine 4 and asparagine 10 each carry an N-linked (GlcNAc...) asparagine glycan. A helical transmembrane segment spans residues 28 to 50 (FSLLVHGVTFIFGVLGNGLVIWV). Over 51-61 (AGFLMTRTVNT) the chain is Cytoplasmic. A helical transmembrane segment spans residues 62–83 (ICYLNLALADFSFSAILPFHMV). Topologically, residues 84–100 (SVAMREKWPFGSFLCKL) are extracellular. Cysteine 98 and cysteine 176 are oxidised to a cystine. The chain crosses the membrane as a helical span at residues 101-121 (VHVMIDINLFVSVYLITIIAL). At 122–140 (DRCICVLHPAWAQNHRTMS) the chain is on the cytoplasmic side. The chain crosses the membrane as a helical span at residues 141 to 162 (LAKRVMTGLWILTIVLTLPNFI). Residues 163–205 (FWTTISTTNGDTYCIFNFPFWGDTAVERLNVFITMAKVFLILH) are Extracellular-facing. Residues 206-226 (FIIGFSMPMSIITVCYGIIAA) form a helical membrane-spanning segment. Over 227–242 (KIHRNHMIKSSRPLRV) the chain is Cytoplasmic. A helical membrane pass occupies residues 243–266 (FAAVVASFFICWFPYELIGILMAV). Residues 267-286 (WLKEMLLNGKYKIILVLINP) are Extracellular-facing. A helical transmembrane segment spans residues 287-306 (TSSLAFFNSCLNPILYVFLG). Over 307 to 349 (SNFQERLIRSLPTSLERALTEVPDSAQTSNTHTTSASPPEETE) the chain is Cytoplasmic. Residues 327-349 (EVPDSAQTSNTHTTSASPPEETE) form a disordered region. The segment covering 331 to 343 (SAQTSNTHTTSAS) has biased composition (polar residues).

This sequence belongs to the G-protein coupled receptor 1 family.

It localises to the cell membrane. Low affinity receptor for N-formyl-methionyl peptides, which are powerful neutrophils chemotactic factors. Binding of FMLP to the receptor causes activation of neutrophils. This response is mediated via a G-protein that activates a phosphatidylinositol-calcium second messenger system. The protein is N-formyl peptide receptor 3 (FPR3) of Gorilla gorilla gorilla (Western lowland gorilla).